A 253-amino-acid polypeptide reads, in one-letter code: 3-deoxy-manno-octulosonate cytidylyltransferase (253 aa).

Belongs to the KdsB family.

Its subcellular location is the cytoplasm. The catalysed reaction is 3-deoxy-alpha-D-manno-oct-2-ulosonate + CTP = CMP-3-deoxy-beta-D-manno-octulosonate + diphosphate. It participates in nucleotide-sugar biosynthesis; CMP-3-deoxy-D-manno-octulosonate biosynthesis; CMP-3-deoxy-D-manno-octulosonate from 3-deoxy-D-manno-octulosonate and CTP: step 1/1. The protein operates within bacterial outer membrane biogenesis; lipopolysaccharide biosynthesis. Activates KDO (a required 8-carbon sugar) for incorporation into bacterial lipopolysaccharide in Gram-negative bacteria. In Haemophilus ducreyi (strain 35000HP / ATCC 700724), this protein is 3-deoxy-manno-octulosonate cytidylyltransferase.